Reading from the N-terminus, the 623-residue chain is MAU2 chromatid cohesion factor homolog (623 aa).

3 TPR repeats span residues 96 to 129, 451 to 484, and 491 to 524; these read FDTASLLAQLHLKTEQSPHAKAMLRRAVELSQNN, GGFYYVQGLHAFHKNSFHEAKRFLRETLKMANAE, and SCSLVLLSHVFLSIGNSKESMNMVTPAMQLASKI.

This sequence belongs to the SCC4/mau-2 family. Interacts with Nipped-B to form the cohesin loading complex.

It localises to the nucleus. The protein localises to the nucleoplasm. Its function is as follows. Required for association of the cohesin complex with chromatin during interphase. Plays a role in sister chromatid cohesion and normal progression through prometaphase. The sequence is that of MAU2 chromatid cohesion factor homolog from Drosophila grimshawi (Hawaiian fruit fly).